We begin with the raw amino-acid sequence, 275 residues long: Adenylate kinase (275 aa).

Position 54 to 59 (54 to 59 (GAGKGT)) interacts with ATP. The NMP stretch occupies residues 74 to 103 (ATGDMLRSQVAKKTPLGREAKKIMDQGGLV). AMP contacts are provided by residues Thr75, Arg80, 101–103 (GLV), 130–133 (GFPR), and Gln137. The LID stretch occupies residues 171 to 208 (GRLVHPASGRSYHRVFNPPKAEMKDDITGEPLVSRSDD). ATP-binding positions include Arg172 and 181–182 (SY). 2 residues coordinate AMP: Arg205 and Arg216. Gln244 is an ATP binding site.

It belongs to the adenylate kinase family. AK2 subfamily. As to quaternary structure, monomer.

The protein localises to the cytoplasm. It is found in the cytosol. The protein resides in the mitochondrion intermembrane space. It carries out the reaction AMP + ATP = 2 ADP. Functionally, catalyzes the reversible transfer of the terminal phosphate group between ATP and AMP. Plays an important role in cellular energy homeostasis and in adenine nucleotide metabolism. Adenylate kinase activity is critical for regulation of the phosphate utilization and the AMP de novo biosynthesis pathways. The polypeptide is Adenylate kinase (adk1) (Sclerotinia sclerotiorum (strain ATCC 18683 / 1980 / Ss-1) (White mold)).